A 227-amino-acid chain; its full sequence is Cytochrome c oxidase subunit 2 (227 aa).

At 1–14 the chain is on the mitochondrial intermembrane side; that stretch reads MAYPFQLGLQDATS. Residues 15–45 form a helical membrane-spanning segment; that stretch reads PIMEELMNFHDHTLMIVFLISSLVLYIISLM. Topologically, residues 46 to 59 are mitochondrial matrix; the sequence is LTTKLTHTSTMDAQ. Residues 60–87 traverse the membrane as a helical segment; sequence EVETIWTILPAAILILIALPSLRILYMM. Topologically, residues 88–227 are mitochondrial intermembrane; it reads DEINNPVLTV…YFENWSASMI (140 aa). Cu cation-binding residues include H161, C196, E198, C200, H204, and M207. E198 contacts Mg(2+). Y218 is modified (phosphotyrosine).

It belongs to the cytochrome c oxidase subunit 2 family. As to quaternary structure, component of the cytochrome c oxidase (complex IV, CIV), a multisubunit enzyme composed of 14 subunits. The complex is composed of a catalytic core of 3 subunits MT-CO1, MT-CO2 and MT-CO3, encoded in the mitochondrial DNA, and 11 supernumerary subunits COX4I, COX5A, COX5B, COX6A, COX6B, COX6C, COX7A, COX7B, COX7C, COX8 and NDUFA4, which are encoded in the nuclear genome. The complex exists as a monomer or a dimer and forms supercomplexes (SCs) in the inner mitochondrial membrane with NADH-ubiquinone oxidoreductase (complex I, CI) and ubiquinol-cytochrome c oxidoreductase (cytochrome b-c1 complex, complex III, CIII), resulting in different assemblies (supercomplex SCI(1)III(2)IV(1) and megacomplex MCI(2)III(2)IV(2)). Found in a complex with TMEM177, COA6, COX18, COX20, SCO1 and SCO2. Interacts with TMEM177 in a COX20-dependent manner. Interacts with COX20. Interacts with COX16. Cu cation is required as a cofactor.

It localises to the mitochondrion inner membrane. It catalyses the reaction 4 Fe(II)-[cytochrome c] + O2 + 8 H(+)(in) = 4 Fe(III)-[cytochrome c] + 2 H2O + 4 H(+)(out). Its function is as follows. Component of the cytochrome c oxidase, the last enzyme in the mitochondrial electron transport chain which drives oxidative phosphorylation. The respiratory chain contains 3 multisubunit complexes succinate dehydrogenase (complex II, CII), ubiquinol-cytochrome c oxidoreductase (cytochrome b-c1 complex, complex III, CIII) and cytochrome c oxidase (complex IV, CIV), that cooperate to transfer electrons derived from NADH and succinate to molecular oxygen, creating an electrochemical gradient over the inner membrane that drives transmembrane transport and the ATP synthase. Cytochrome c oxidase is the component of the respiratory chain that catalyzes the reduction of oxygen to water. Electrons originating from reduced cytochrome c in the intermembrane space (IMS) are transferred via the dinuclear copper A center (CU(A)) of subunit 2 and heme A of subunit 1 to the active site in subunit 1, a binuclear center (BNC) formed by heme A3 and copper B (CU(B)). The BNC reduces molecular oxygen to 2 water molecules using 4 electrons from cytochrome c in the IMS and 4 protons from the mitochondrial matrix. The protein is Cytochrome c oxidase subunit 2 (MT-CO2) of Praomys tullbergi (Tullberg's soft-furred rat).